We begin with the raw amino-acid sequence, 371 residues long: GTPase Obg (371 aa).

The Obg domain occupies 1–159; sequence MKFVDEAYID…KNLKLELKVL (159 aa). One can recognise an OBG-type G domain in the interval 160–334; it reads ADVGLLGMPN…LIRTIYKHVH (175 aa). Residues 166–173, 191–195, 213–216, 284–287, and 315–317 contribute to the GTP site; these read GMPNAGKS, FTTLH, DIPG, NKLD, and SAL. Residues Ser-173 and Thr-193 each coordinate Mg(2+).

This sequence belongs to the TRAFAC class OBG-HflX-like GTPase superfamily. OBG GTPase family. As to quaternary structure, monomer. Mg(2+) serves as cofactor.

It localises to the cytoplasm. Its function is as follows. An essential GTPase which binds GTP, GDP and possibly (p)ppGpp with moderate affinity, with high nucleotide exchange rates and a fairly low GTP hydrolysis rate. Plays a role in control of the cell cycle, stress response, ribosome biogenesis and in those bacteria that undergo differentiation, in morphogenesis control. This Delftia acidovorans (strain DSM 14801 / SPH-1) protein is GTPase Obg.